The primary structure comprises 158 residues: UPF0336 protein Mb0654 (158 aa).

Belongs to the UPF0336 family.

The protein is UPF0336 protein Mb0654 of Mycobacterium bovis (strain ATCC BAA-935 / AF2122/97).